Here is a 147-residue protein sequence, read N- to C-terminus: Hemoglobin subunit gamma-1 (147 aa).

N-acetylglycine is present on Gly2. Residues 3 to 147 (HFTEEDKATI…VASALSSRYH (145 aa)) enclose the Globin domain. Thr13 bears the Phosphothreonine mark. Phosphoserine occurs at positions 45, 51, and 53. At Lys60 the chain carries N6-acetyllysine. His64 provides a ligand contact to heme b. The residue at position 83 (Lys83) is an N6-acetyllysine. His93 contributes to the heme b binding site. Cys94 carries the S-nitrosocysteine modification. The residue at position 140 (Ser140) is a Phosphoserine.

This sequence belongs to the globin family. In terms of assembly, heterotetramer of two alpha chains and two gamma chains in fetal hemoglobin (Hb F). As to expression, red blood cells.

Functionally, gamma chains make up the fetal hemoglobin F, in combination with alpha chains. The protein is Hemoglobin subunit gamma-1 (HBG1) of Gorilla gorilla gorilla (Western lowland gorilla).